The sequence spans 420 residues: Protein phosphatase methylesterase 1 (420 aa).

Composition is skewed to low complexity over residues 18-28 and 42-51; these read PEAPLLSESSS and SSVSSTGTVI. The disordered stretch occupies residues 18 to 51; it reads PEAPLLSESSSMNHPAESSHDEDSSSVSSTGTVI. Active-site residues include serine 197, aspartate 223, and histidine 354.

Belongs to the AB hydrolase superfamily.

It carries out the reaction [phosphatase 2A protein]-C-terminal L-leucine methyl ester + H2O = [phosphatase 2A protein]-C-terminal L-leucine + methanol + H(+). Its function is as follows. Demethylates proteins that have been reversibly carboxymethylated. Demethylates the phosphatase PP2A catalytic subunit. This chain is Protein phosphatase methylesterase 1 (ppe1), found in Aspergillus fumigatus (strain ATCC MYA-4609 / CBS 101355 / FGSC A1100 / Af293) (Neosartorya fumigata).